The sequence spans 285 residues: Neuralized-like protein 2 (285 aa).

The segment at 1–28 (MADPSEHVGLGGPRSPARPEPPPTRFHQ) is disordered. Positions 23 to 244 (PTRFHQVHGA…STKSVRLVQL (222 aa)) constitute an NHR domain. In terms of domain architecture, SOCS box spans 250–285 (SLQTLCRLVIHKRVVHRLAIDVLHLPKGLKDFCKYE).

In terms of assembly, probable component the ECS(NEURL2) E3 ubiquitin-protein ligase complex consisting of ELOB/Elongin B, ELOC/Elongin C, CUL5, RBX1 and NEURL2. Interacts with CTNNB1. As to expression, expressed specifically in skeletal and cardiac muscles.

It localises to the cytoplasm. It functions in the pathway protein modification; protein ubiquitination. In terms of biological role, plays an important role in the process of myofiber differentiation and maturation. Probable substrate-recognition component of a SCF-like ECS (Elongin BC-CUL2/5-SOCS-box protein) E3 ubiquitin-protein ligase complex, which mediates the ubiquitination of proteins. Probably contributes to catalysis through recognition and positioning of the substrate and the ubiquitin-conjugating enzyme. During myogenesis, controls the ubiquitination and degradation of the specific pool of CTNNB1/beta-catenin located at the sarcolemma. The chain is Neuralized-like protein 2 (Neurl2) from Mus musculus (Mouse).